Here is a 147-residue protein sequence, read N- to C-terminus: D-aminoacyl-tRNA deacylase (147 aa).

A Gly-cisPro motif, important for rejection of L-amino acids motif is present at residues 136–137 (GP).

It belongs to the DTD family. As to quaternary structure, homodimer.

It is found in the cytoplasm. The enzyme catalyses glycyl-tRNA(Ala) + H2O = tRNA(Ala) + glycine + H(+). The catalysed reaction is a D-aminoacyl-tRNA + H2O = a tRNA + a D-alpha-amino acid + H(+). In terms of biological role, an aminoacyl-tRNA editing enzyme that deacylates mischarged D-aminoacyl-tRNAs. Also deacylates mischarged glycyl-tRNA(Ala), protecting cells against glycine mischarging by AlaRS. Acts via tRNA-based rather than protein-based catalysis; rejects L-amino acids rather than detecting D-amino acids in the active site. By recycling D-aminoacyl-tRNA to D-amino acids and free tRNA molecules, this enzyme counteracts the toxicity associated with the formation of D-aminoacyl-tRNA entities in vivo and helps enforce protein L-homochirality. The protein is D-aminoacyl-tRNA deacylase of Persephonella marina (strain DSM 14350 / EX-H1).